Consider the following 180-residue polypeptide: Non-structural protein 4 (180 aa).

Transmembrane regions (helical) follow at residues 16 to 36 (VCVHKMTLLIILIISAAVTVI) and 52 to 72 (IVSTITDGINATIISVMAILG).

It is found in the host membrane. This chain is Non-structural protein 4 (Segment-11), found in Banna virus (BAV).